We begin with the raw amino-acid sequence, 924 residues long: Exocyst complex component 2 (924 aa).

One can recognise an IPT/TIG domain in the interval 8–93 (PLVTGISPNE…GTSTVSFKLL (86 aa)). A coiled-coil region spans residues 240–260 (QKLENVLNRASNTADTLFQEV). Phosphoserine occurs at positions 431, 432, and 435. T440 is modified (phosphothreonine). K454 is subject to N6-acetyllysine. Position 888 is a phosphoserine (S888).

The protein belongs to the SEC5 family. As to quaternary structure, the exocyst complex is composed of EXOC1, EXOC2, EXOC3, EXOC4, EXOC5, EXOC6, EXOC7 and EXOC8. Interacts with EXOC3L1. Interacts with GNEFR/DELGEF; this interaction occurs only in the presence of magnesium or manganese and is stimulated by dCTP or GTP. Interacts with RALA and RALB. Interacts with ARL13B; regulates ARL13B localization to the cilium membrane. Widely expressed with highest levels in brain and placenta.

Its subcellular location is the midbody. It is found in the midbody ring. In terms of biological role, component of the exocyst complex involved in the docking of exocytic vesicles with fusion sites on the plasma membrane. In Homo sapiens (Human), this protein is Exocyst complex component 2 (EXOC2).